Reading from the N-terminus, the 393-residue chain is Formate-dependent phosphoribosylglycinamide formyltransferase (393 aa).

N(1)-(5-phospho-beta-D-ribosyl)glycinamide-binding positions include 22–23 (EL) and Glu-82. Residues Arg-114, Lys-155, 160–165 (SSGHGQ), 195–198 (EGFI), and Glu-203 each bind ATP. Residues 119-308 (RLAAEELGLP…QFALHARAIL (190 aa)) form the ATP-grasp domain. Mg(2+) contacts are provided by Glu-267 and Glu-279. Residues Asp-286, Lys-356, and 363–364 (RR) each bind N(1)-(5-phospho-beta-D-ribosyl)glycinamide.

This sequence belongs to the PurK/PurT family. Homodimer.

It carries out the reaction N(1)-(5-phospho-beta-D-ribosyl)glycinamide + formate + ATP = N(2)-formyl-N(1)-(5-phospho-beta-D-ribosyl)glycinamide + ADP + phosphate + H(+). Its pathway is purine metabolism; IMP biosynthesis via de novo pathway; N(2)-formyl-N(1)-(5-phospho-D-ribosyl)glycinamide from N(1)-(5-phospho-D-ribosyl)glycinamide (formate route): step 1/1. In terms of biological role, involved in the de novo purine biosynthesis. Catalyzes the transfer of formate to 5-phospho-ribosyl-glycinamide (GAR), producing 5-phospho-ribosyl-N-formylglycinamide (FGAR). Formate is provided by PurU via hydrolysis of 10-formyl-tetrahydrofolate. The sequence is that of Formate-dependent phosphoribosylglycinamide formyltransferase from Haemophilus ducreyi (strain 35000HP / ATCC 700724).